The following is a 384-amino-acid chain: MAKHLFTSESVSEGHPDKIADQISDAVLDAILEQDPKARVACETYVKTGMVLVGGEITTSAWVDIEEITRNTVREIGYVHSDMGFDANSCAVLSAIGKQSPDINQGVDRADPLEQGAGDQGLMFGYATNETDVLMPAPVTYAHRLVQRQAEVRKNGTLPWLRPDAKSQVTFQYDDGKIVGIDAVVLSTQHAEDIDQKSLQEAVMEEIIKPTLPTEWLNASTKFFINPTGRFVIGGPMGDCGLTGRKIIVDTYGGMARHGGGAFSGKDPSKVDRSAAYAARYVAKNIVAAGLADRCEIQVSYAIGVAEPTSIMVETFGTEKVPSEQLTLLVREFFDLRPYGLIQMLDLLHPIYKETAAYGHFGREHFPWEKTDKAALLREAAGLK.

Position 15 (H15) interacts with ATP. D17 is a binding site for Mg(2+). E43 is a binding site for K(+). 2 residues coordinate L-methionine: E56 and Q99. Residues 99 to 109 (QSPDINQGVDR) form a flexible loop region. Residues 164–166 (DAK), 230–231 (RF), D239, 245–246 (RK), A262, and K266 contribute to the ATP site. D239 contributes to the L-methionine binding site. K270 lines the L-methionine pocket.

This sequence belongs to the AdoMet synthase family. Homotetramer; dimer of dimers. Requires Mg(2+) as cofactor. K(+) serves as cofactor.

The protein resides in the cytoplasm. The catalysed reaction is L-methionine + ATP + H2O = S-adenosyl-L-methionine + phosphate + diphosphate. Its pathway is amino-acid biosynthesis; S-adenosyl-L-methionine biosynthesis; S-adenosyl-L-methionine from L-methionine: step 1/1. Catalyzes the formation of S-adenosylmethionine (AdoMet) from methionine and ATP. The overall synthetic reaction is composed of two sequential steps, AdoMet formation and the subsequent tripolyphosphate hydrolysis which occurs prior to release of AdoMet from the enzyme. In Klebsiella pneumoniae (strain 342), this protein is S-adenosylmethionine synthase.